Reading from the N-terminus, the 399-residue chain is MKVIAVDKVVLAFSGGLDTSVCIKLLEEKYNMEVITACVDVGQPRDEIERPAMVAKELGNYRHYTVDARREFAEDYIFPAIKANAVYEGYPLSTALARPLIAKKIVEVAEKEGASAIAHGCTGKGNDQFRFEAVIRSTTDLDVIAPIRDLNLTRTEEMEYARSCGIPLPSDKLYSIDENLWGRAIEGDILEDPMVEPPEDAFEWTKPIHETPEDPEVIEIGFHGGVPVALNGEELEPVELIGLANEVAGKHGIGRVDIMEDRIIGMKSREIYETPAAFLLLEAHRGLEQLTLTRSELRFADIISSTYAELVYSGLWHDPLREDLDMAVNHMQRRVTGTVRVKLHRGSMRVIGRESPYSLYSEEIVSFEDKTLDQREMAGMVKNYALQAAIYSRVCRKEN.

12–20 (AFSGGLDTS) contacts ATP. Tyr-90 serves as a coordination point for L-citrulline. Gly-120 is an ATP binding site. L-aspartate contacts are provided by Thr-122, Asn-126, and Asp-127. Asn-126 is a binding site for L-citrulline. L-citrulline-binding residues include Arg-130, Ser-175, Glu-260, and Tyr-272.

This sequence belongs to the argininosuccinate synthase family. Type 1 subfamily. Homotetramer.

It is found in the cytoplasm. The catalysed reaction is L-citrulline + L-aspartate + ATP = 2-(N(omega)-L-arginino)succinate + AMP + diphosphate + H(+). The protein operates within amino-acid biosynthesis; L-arginine biosynthesis; L-arginine from L-ornithine and carbamoyl phosphate: step 2/3. This is Argininosuccinate synthase from Methanothermobacter thermautotrophicus (strain ATCC 29096 / DSM 1053 / JCM 10044 / NBRC 100330 / Delta H) (Methanobacterium thermoautotrophicum).